A 169-amino-acid polypeptide reads, in one-letter code: Sorting nexin-24 (169 aa).

Position 1 is an N-acetylmethionine (Met-1). In terms of domain architecture, PX spans 1–125 (MEVYIPSFRY…SFDETESEES (125 aa)). A 1,2-diacyl-sn-glycero-3-phospho-(1D-myo-inositol-3-phosphate)-binding residues include Arg-38, Ser-40, Lys-61, and Arg-74. A phosphoserine mark is found at Ser-113 and Ser-116.

The protein belongs to the sorting nexin family.

It localises to the cytoplasmic vesicle membrane. May be involved in several stages of intracellular trafficking. In Bos taurus (Bovine), this protein is Sorting nexin-24 (SNX24).